The chain runs to 462 residues: UDP-N-acetylmuramoylalanine--D-glutamate ligase (462 aa).

Position 111–117 (111–117) interacts with ATP; it reads GTNGKTT.

Belongs to the MurCDEF family.

It localises to the cytoplasm. The catalysed reaction is UDP-N-acetyl-alpha-D-muramoyl-L-alanine + D-glutamate + ATP = UDP-N-acetyl-alpha-D-muramoyl-L-alanyl-D-glutamate + ADP + phosphate + H(+). It functions in the pathway cell wall biogenesis; peptidoglycan biosynthesis. In terms of biological role, cell wall formation. Catalyzes the addition of glutamate to the nucleotide precursor UDP-N-acetylmuramoyl-L-alanine (UMA). In Trichodesmium erythraeum (strain IMS101), this protein is UDP-N-acetylmuramoylalanine--D-glutamate ligase.